The chain runs to 187 residues: dTTP/UTP pyrophosphatase (187 aa).

Asp72 serves as the catalytic Proton acceptor.

The protein belongs to the Maf family. YhdE subfamily. It depends on a divalent metal cation as a cofactor.

It localises to the cytoplasm. The enzyme catalyses dTTP + H2O = dTMP + diphosphate + H(+). It catalyses the reaction UTP + H2O = UMP + diphosphate + H(+). Nucleoside triphosphate pyrophosphatase that hydrolyzes dTTP and UTP. May have a dual role in cell division arrest and in preventing the incorporation of modified nucleotides into cellular nucleic acids. This is dTTP/UTP pyrophosphatase from Vibrio cholerae serotype O1 (strain ATCC 39315 / El Tor Inaba N16961).